Reading from the N-terminus, the 963-residue chain is Ubiquitin carboxyl-terminal hydrolase 4 (963 aa).

The DUSP domain occupies 11-122 (PDAETQKSEL…GQQPIVRKVV (112 aa)). The segment at 27-216 (TLQRGAQWYL…LYQGQVLVIE (190 aa)) is necessary for interaction with SART3. The short motif at 133-141 (VEVYLLELK) is the Nuclear export signal element. A Ubiquitin-like 1 domain is found at 142 to 226 (LCENSDPTNV…PQNEDGTWPR (85 aa)). The tract at residues 219–277 (NEDGTWPRQTQQSKSSTAPSRNFTTSPKSSASPYSSVSASPIANGDSTNTSGMHSSGVS) is disordered. Positions 225 to 243 (PRQTQQSKSSTAPSRNFTT) are enriched in polar residues. The segment at 229-295 (QQSKSSTAPS…SYNCQESPLT (67 aa)) is required for USP4 activation by providing conformational flexibility between the DUSP and catalytic domains. The segment covering 244 to 261 (SPKSSASPYSSVSASPIA) has biased composition (low complexity). In terms of domain architecture, USP spans 302 to 923 (CGLGNLGNTC…AAYVLFYQRR (622 aa)). The active-site Nucleophile is the cysteine 311. Residues 384 to 386 (PQF) are regulates ubiquitin dissociation. Residues 405–407 (LHE) are necessary for interaction with RBL2. Serine 445 carries the phosphoserine modification. The segment at 459-463 (LVCPE) is necessary for interaction with RB1 and RBL2. The Zn(2+) site is built by cysteine 461 and cysteine 464. A Ubiquitin-like 2 domain is found at 483–571 (LKKDRVMEIF…IFVYEVCSTS (89 aa)). The interval 485–775 (KDRVMEIFLV…LQPQKKKKTA (291 aa)) is interacts with DUSP and ubiquitin-like 1 domains and is required for USP4 activation. The segment at 634–701 (PLPDESGSSP…ATQKKNKGRP (68 aa)) is disordered. Serine 675 and serine 680 each carry phosphoserine. Positions 767 to 772 (QPQKKK) match the Nuclear localization signal motif. The Zn(2+) site is built by cysteine 799 and cysteine 802. The Proton acceptor role is filled by histidine 881. Residues 930-963 (TPSLSFPGSSDGGARPSSSQQGTGDDETYSMDTN) are disordered. Residues 953 to 963 (GDDETYSMDTN) show a composition bias toward acidic residues.

It belongs to the peptidase C19 family. USP4 subfamily. Interacts with RB1 (both dephosphorylated and hypophosphorylated forms). Interacts with RBL1 and RBL2. Interacts with ADORA2A (via cytoplasmic C-terminus); the interaction is direct. Interacts with SART3; recruits USP4 to its substrate PRPF3. In terms of processing, phosphorylated at Ser-445 by PKB/AKT1 in response to EGF stimulus, promoting its ability deubiquitinate RHEB. Monoubiquitinated by TRIM21. Ubiquitination does not lead to its proteasomal degradation. Autodeubiquitinated.

It localises to the cytoplasm. The protein localises to the nucleus. It carries out the reaction Thiol-dependent hydrolysis of ester, thioester, amide, peptide and isopeptide bonds formed by the C-terminal Gly of ubiquitin (a 76-residue protein attached to proteins as an intracellular targeting signal).. With respect to regulation, the completion of the deubiquitinase reaction is mediated by the DUSP and ubiquitin-like 1 domains which promotes the release of ubiquitin from the catalytic site enabling subsequent reactions to occur. In terms of biological role, deubiquitinating enzyme that removes conjugated ubiquitin from target proteins. Deubiquitinates PDPK1. Deubiquitinates TRIM21. Deubiquitinates receptor ADORA2A which increases the amount of functional receptor at the cell surface. Deubiquitinates HAS2. Deubiquitinates RHEB in response to EGF signaling, promoting mTORC1 signaling. May regulate mRNA splicing through deubiquitination of the U4 spliceosomal protein PRPF3. This may prevent its recognition by the U5 component PRPF8 thereby destabilizing interactions within the U4/U6.U5 snRNP. May also play a role in the regulation of quality control in the ER. The protein is Ubiquitin carboxyl-terminal hydrolase 4 (USP4) of Bos taurus (Bovine).